Consider the following 25-residue polypeptide: Bombinin-like peptide 4 (25 aa).

Phenylalanine amide is present on F25.

Belongs to the bombinin family. In terms of tissue distribution, expressed by the skin glands.

It is found in the secreted. Has antimicrobial activity, but no hemolytic activity. Preference on killing Gram-negative non-enteric bacteria. The protein is Bombinin-like peptide 4 of Bombina orientalis (Oriental fire-bellied toad).